A 238-amino-acid polypeptide reads, in one-letter code: 7-cyano-7-deazaguanine synthase (238 aa).

An ATP-binding site is contributed by 12–22 (FSGGQDSTTCL). Zn(2+)-binding residues include Cys-191, Cys-200, Cys-203, and Cys-206.

Belongs to the QueC family. Requires Zn(2+) as cofactor.

It carries out the reaction 7-carboxy-7-deazaguanine + NH4(+) + ATP = 7-cyano-7-deazaguanine + ADP + phosphate + H2O + H(+). The protein operates within purine metabolism; 7-cyano-7-deazaguanine biosynthesis. Functionally, catalyzes the ATP-dependent conversion of 7-carboxy-7-deazaguanine (CDG) to 7-cyano-7-deazaguanine (preQ(0)). The protein is 7-cyano-7-deazaguanine synthase of Shewanella oneidensis (strain ATCC 700550 / JCM 31522 / CIP 106686 / LMG 19005 / NCIMB 14063 / MR-1).